A 358-amino-acid polypeptide reads, in one-letter code: Alanine racemase (358 aa).

The Proton acceptor; specific for D-alanine role is filled by Lys-35. Lys-35 carries the post-translational modification N6-(pyridoxal phosphate)lysine. Position 130 (Arg-130) interacts with substrate. Tyr-255 functions as the Proton acceptor; specific for L-alanine in the catalytic mechanism. Met-303 lines the substrate pocket.

It belongs to the alanine racemase family. It depends on pyridoxal 5'-phosphate as a cofactor.

The enzyme catalyses L-alanine = D-alanine. It participates in amino-acid biosynthesis; D-alanine biosynthesis; D-alanine from L-alanine: step 1/1. In terms of biological role, catalyzes the interconversion of L-alanine and D-alanine. May also act on other amino acids. This Shewanella sp. (strain MR-4) protein is Alanine racemase (alr).